The sequence spans 336 residues: Calcium-gated potassium channel MthK (336 aa).

Residues 1 to 20 lie on the Cytoplasmic side of the membrane; sequence MVLVIEIIRKHLPRVLKVPA. A helical membrane pass occupies residues 21–41; sequence TRILLLVLAVIIYGTAGFHFI. The Extracellular portion of the chain corresponds to 42 to 48; the sequence is EGESWTV. Positions 49 to 58 form an intramembrane region, helical; Pore-forming; sequence SLYWTFVTIA. The pore-forming intramembrane region spans 59–64; that stretch reads TVGYGD. The Selectivity filter signature appears at 59 to 64; it reads TVGYGD. Over 65–69 the chain is Extracellular; it reads YSPST. A helical transmembrane segment spans residues 70–95; the sequence is PLGMYFTVTLIVLGIGTFAVAVERLL. Topologically, residues 96-106 are cytoplasmic; the sequence is EFLINREQMKL. Residues 115 to 230 enclose the RCK N-terminal domain; that stretch reads SRHVVICGWS…RMAGADQVIS (116 aa). Residues Asp-184, Glu-210, and Glu-212 each contribute to the Ca(2+) site. The region spanning 252 to 336 is the RCK C-terminal domain; it reads VQDVLAEEST…IERLKNYISA (85 aa).

As to quaternary structure, homotetramer.

It localises to the cell membrane. Calcium-gated potassium channel. This is Calcium-gated potassium channel MthK (mthK) from Methanothermobacter thermautotrophicus (strain ATCC 29096 / DSM 1053 / JCM 10044 / NBRC 100330 / Delta H) (Methanobacterium thermoautotrophicum).